The chain runs to 102 residues: CRISPR-associated endoribonuclease Cas2 (102 aa).

Aspartate 8 contributes to the Mg(2+) binding site.

This sequence belongs to the CRISPR-associated endoribonuclease Cas2 protein family. In terms of assembly, homodimer, forms a heterotetramer with a Cas1 homodimer. Mg(2+) is required as a cofactor.

Functionally, CRISPR (clustered regularly interspaced short palindromic repeat), is an adaptive immune system that provides protection against mobile genetic elements (viruses, transposable elements and conjugative plasmids). CRISPR clusters contain sequences complementary to antecedent mobile elements and target invading nucleic acids. CRISPR clusters are transcribed and processed into CRISPR RNA (crRNA). Functions as a ssRNA-specific endoribonuclease. Involved in the integration of spacer DNA into the CRISPR cassette. The protein is CRISPR-associated endoribonuclease Cas2 of Acidovorax ebreus (strain TPSY) (Diaphorobacter sp. (strain TPSY)).